Consider the following 264-residue polypeptide: 5'-nucleotidase SurE (264 aa).

A divalent metal cation contacts are provided by D8, D9, S41, and N98.

Belongs to the SurE nucleotidase family. A divalent metal cation is required as a cofactor.

The protein resides in the cytoplasm. It catalyses the reaction a ribonucleoside 5'-phosphate + H2O = a ribonucleoside + phosphate. Functionally, nucleotidase that shows phosphatase activity on nucleoside 5'-monophosphates. The protein is 5'-nucleotidase SurE of Carboxydothermus hydrogenoformans (strain ATCC BAA-161 / DSM 6008 / Z-2901).